A 154-amino-acid polypeptide reads, in one-letter code: Transcription antitermination protein NusB (154 aa).

Residues 132–154 are disordered; it reads KDKQSPQSTPLDDSDKDESDQTN. Over residues 143 to 154 the composition is skewed to acidic residues; that stretch reads DDSDKDESDQTN.

The protein belongs to the NusB family.

In terms of biological role, involved in transcription antitermination. Required for transcription of ribosomal RNA (rRNA) genes. Binds specifically to the boxA antiterminator sequence of the ribosomal RNA (rrn) operons. The protein is Transcription antitermination protein NusB of Bifidobacterium animalis subsp. lactis (strain AD011).